The primary structure comprises 757 residues: E3 ubiquitin-protein ligase RNF12-B (757 aa).

Over residues 1–10 (MESADSTGKG) the composition is skewed to polar residues. Disordered regions lie at residues 1–29 (MESADSTGKGSTEQSESQRQSQMDRLDRE), 68–519 (LQQI…TYES), and 619–652 (EPAEPVAPVESDEGSNVATSATRREGRNSRGGVT). Low complexity predominate over residues 11–21 (STEQSESQRQS). Composition is skewed to polar residues over residues 110-138 (SVRQTGNTTRSGQRGNQSWRAVSRTNPNS) and 147-163 (INVNRTSGTASMPSLDQ). Tandem repeats lie at residues 197-202 (PESVDE), 203-208 (PVSVAE), 209-214 (PVSVAE), 215-220 (PVSVAE), 221-226 (PESVAE), 227-232 (PESVAA), 237-242 (PESVPE), 243-248 (PESVPE), 249-254 (PESVPE), 255-260 (PESVPE), 261-266 (PESVPE), 267-272 (PESVPE), 273-278 (PESVPE), 279-284 (PESVPE), 285-290 (PESVPE), 291-296 (PESVPE), 297-302 (PESVPE), 303-308 (PESVPE), 309-314 (PESIAE), 315-320 (PESVPV), and 321-326 (PESVPV). The interval 197-326 (PESVDEPVSV…SVPVPESVPV (130 aa)) is 21 X 6 AA approximate repeats of P-[EV]-S-V-[PA]-[EV]. Positions 202–237 (EPVSVAEPVSVAEPVSVAEPESVAEPESVAASVPVP) are enriched in low complexity. Over residues 245-313 (SVPEPESVPE…ESVPEPESIA (69 aa)) the composition is skewed to acidic residues. The segment covering 314–327 (EPESVPVPESVPVA) has biased composition (low complexity). Basic and acidic residues predominate over residues 352-367 (RSPDQRRTRARTDRSR). The span at 383-392 (HSSSQTVDAS) shows a compositional bias: polar residues. Residues 408–424 (SSQVHSSSSNETEGSSR) show a composition bias toward low complexity. Polar residues predominate over residues 428–452 (HITARQQALGTEGQSQSTVHLSNPE). The span at 453-466 (SRSSSQTPQTDSPS) shows a compositional bias: low complexity. A compositionally biased stretch (polar residues) spans 467–476 (NAETTGTGQR). Positions 490-500 (RPGDYRQRDSI) are enriched in basic and acidic residues. A compositionally biased stretch (polar residues) spans 501–517 (ANRTRSRSQTPNNTVTY). The RING-type; atypical zinc finger occupies 703-744 (CSVCITEYTEGNKLRKLPCSHEYHIHCIDRWLSENSTCPICR). The PDZ-binding signature appears at 754–757 (ESIV).

This sequence belongs to the RNF12 family. Forms homodimers through the C-terminal region. The N-terminus interacts with the homeobox of LIM/homeobox factor lhx1/lim1, with lhx3/lim3 and lhx5/lim5, and with the N-terminus of ldb1. As to expression, shows overlapping expression with lhx1/lim1 and ldb1 in the gastrula mesoderm, and expression overlaps with ldb1 throughout early embryogenesis. After gastrulation, expression is gradually restricted to tissues originated from the ectoderm, the neuroectoderm, neural crest and epidermis, and subsequently to the neural tube as well as the head and tailbud region.

It localises to the nucleus. It carries out the reaction S-ubiquitinyl-[E2 ubiquitin-conjugating enzyme]-L-cysteine + [acceptor protein]-L-lysine = [E2 ubiquitin-conjugating enzyme]-L-cysteine + N(6)-ubiquitinyl-[acceptor protein]-L-lysine.. Its pathway is protein modification; protein ubiquitination. Functionally, acts as an E3 ubiquitin-protein ligase specific for ldb1, mediating ubiquitination and proteasome-dependent degradation of excess ldb1 in a RING-dependent manner. Does not degrade ldb1 bound to lhx1/lim1, nor lim1 itself and thus contributes to the establishment of proper ldb1-lhx1/lim1 stoichiometry and the formation of a ldb1-lhx1/lim1 complex. Interferes with Spemann organizer function and suppresses secondary axis formation induced by ldb1 and lhx1/lim1. In Xenopus laevis (African clawed frog), this protein is E3 ubiquitin-protein ligase RNF12-B (rnf12-b).